A 138-amino-acid polypeptide reads, in one-letter code: Acidic phospholipase A2 daboiatoxin A chain (138 aa).

An N-terminal signal peptide occupies residues 1–16 (MRTLWIMAVCLIGVEG). 7 disulfide bridges follow: C42–C131, C44–C60, C59–C111, C65–C138, C66–C104, C73–C97, and C91–C102. Ca(2+) is bound by residues Y43, G45, and G47. Residue H63 is part of the active site. Residue D64 participates in Ca(2+) binding. D105 is a catalytic residue.

The protein belongs to the phospholipase A2 family. Group II subfamily. D49 sub-subfamily. In terms of assembly, heterodimer of A and B chain; non-covalently linked. The acidic protein (B chain) has phospholipase A2 activity and the A chain weakly inhibits the B chain enzymatic activity but potentiates its lethal potency. Requires Ca(2+) as cofactor. Expressed by the venom gland.

It localises to the secreted. The catalysed reaction is a 1,2-diacyl-sn-glycero-3-phosphocholine + H2O = a 1-acyl-sn-glycero-3-phosphocholine + a fatty acid + H(+). Its function is as follows. Heterodimer (A and B chains): phospholipase A2 that acts as a presynaptic neurotoxin and shows a PLA2 activity of 1377 umol/min/mg. In vivo, induces edema and produces neurotoxic symptoms in mice. Also exhibits indirect hemolysis, a strong myonecrotic activity and cytotoxicity. PLA2 catalyzes the calcium-dependent hydrolysis of the 2-acyl groups in 3-sn-phosphoglycerides. In terms of biological role, monomer: Snake venom phospholipase A2 (PLA2) that shows a PLA2 activity of 578 umol/min/mg. The protein is Acidic phospholipase A2 daboiatoxin A chain of Daboia siamensis (Eastern Russel's viper).